We begin with the raw amino-acid sequence, 233 residues long: Large ribosomal subunit protein uL1 (233 aa).

The protein belongs to the universal ribosomal protein uL1 family. Part of the 50S ribosomal subunit.

In terms of biological role, binds directly to 23S rRNA. The L1 stalk is quite mobile in the ribosome, and is involved in E site tRNA release. Functionally, protein L1 is also a translational repressor protein, it controls the translation of the L11 operon by binding to its mRNA. The protein is Large ribosomal subunit protein uL1 of Deinococcus deserti (strain DSM 17065 / CIP 109153 / LMG 22923 / VCD115).